We begin with the raw amino-acid sequence, 194 residues long: Casparian strip membrane protein 2 (194 aa).

At 1-32 (MSTTIDIPESSKVVKGKGVVAAPLRPGGWKKG) the chain is on the cytoplasmic side. The chain crosses the membrane as a helical span at residues 33-53 (VAIMDFILRLGAIAAALGAAA). The Extracellular segment spans residues 54-82 (TMGTSDQTLPFFTQFFQFEASYDSFTTFQ). A helical membrane pass occupies residues 83 to 103 (FFVITMALVGGYLVLSLPFSV). The Cytoplasmic portion of the chain corresponds to 104–115 (VAIIRPHAVGPR). Residues 116–136 (LFLIILDTVFLTLATASAASA) traverse the membrane as a helical segment. Topologically, residues 137–168 (AAVVYLAHNGDQDTNWLAICNQFGDFCAQTSS) are extracellular. Residues 169-189 (AVVSSFVAVVVFVLLIVMSAL) traverse the membrane as a helical segment. At 190–194 (AMGKP) the chain is on the cytoplasmic side.

It belongs to the Casparian strip membrane proteins (CASP) family. Homodimer and heterodimers.

Its subcellular location is the cell membrane. Functionally, regulates membrane-cell wall junctions and localized cell wall deposition. Required for establishment of the Casparian strip membrane domain (CSD) and the subsequent formation of Casparian strips, a cell wall modification of the root endodermis that determines an apoplastic barrier between the intraorganismal apoplasm and the extraorganismal apoplasm and prevents lateral diffusion. This chain is Casparian strip membrane protein 2, found in Vigna unguiculata (Cowpea).